Reading from the N-terminus, the 267-residue chain is Cysteine protease avirulence protein AvrPphB (267 aa).

Glycine 63 carries N-myristoyl glycine; by host lipidation. Residues cysteine 98, histidine 212, and aspartate 227 contribute to the active site.

It belongs to the peptidase C58 family. As to quaternary structure, in infected plant cells, the 28 kDa product interacts with PBS1. Autocleaved. This function is essential for myristoylation in infected plant cell and for eliciting the plant hypersensitive response. Post-translationally, myristoylation of 28 kDa product in infected plant cells; it mediates the localization to membranes.

It is found in the secreted. The protein resides in the host membrane. In terms of biological role, cysteine protease avirulence protein, which is essential during infection of plant cells from cultivar-specific of beans and Arabidopsis thaliana. The autocleavage of the protein is required for virulence function. May act by affecting the plant defense system. In plants lacking R3 or RPS5 resistance genes, it probably impairs the plant defense system and leads to the bacteria multiplication. In contrast, in plants containing the R3 or RPS5 protein, it is unable to induce disease symptoms, explaining its avirulence name. The 7 kDa product is required for the type-III translocation from Pseudomonas strains to the plant, but are partially dispensable for effector recognition following in planta expression. In infected plants, it acts by cleaving the PBS1 protein, which leads to resistance or disease, depending on the presence or absence of RPS5, respectively. Targets the Arabidopsis kinases PBS1, BIK1, PBL1, PBL2, PBL3, PBL5, PBL7, PBL9 and PBL11 for cleavage in vitro. Can block recognition of AvrB avirulence factor by plant cells by cleaving Arabidopsis RIPK kinase and suppressing Arabidopsis RPM1 activation. Cannot block AvrRpm1-induced activation of RPM1. This is Cysteine protease avirulence protein AvrPphB (avrPph3) from Pseudomonas savastanoi pv. phaseolicola (Pseudomonas syringae pv. phaseolicola).